Here is a 297-residue protein sequence, read N- to C-terminus: Tyrosine recombinase XerD (297 aa).

In terms of domain architecture, Core-binding (CB) spans 1 to 86 (MNDLIEDFLH…SLRSFFHYLM (86 aa)). In terms of domain architecture, Tyr recombinase spans 107-291 (GLPKVLNLDD…TKLRLKDVYK (185 aa)). Active-site residues include Arg-147, Lys-171, His-243, Arg-246, and His-269. Tyr-278 acts as the O-(3'-phospho-DNA)-tyrosine intermediate in catalysis.

The protein belongs to the 'phage' integrase family. XerD subfamily. Forms a cyclic heterotetrameric complex composed of two molecules of XerC and two molecules of XerD.

It is found in the cytoplasm. Functionally, site-specific tyrosine recombinase, which acts by catalyzing the cutting and rejoining of the recombining DNA molecules. The XerC-XerD complex is essential to convert dimers of the bacterial chromosome into monomers to permit their segregation at cell division. It also contributes to the segregational stability of plasmids. The protein is Tyrosine recombinase XerD of Listeria monocytogenes serotype 4b (strain F2365).